We begin with the raw amino-acid sequence, 295 residues long: 4-diphosphocytidyl-2-C-methyl-D-erythritol kinase (295 aa).

K18 is a catalytic residue. Residue 101-111 (PMGGGIGGGSS) participates in ATP binding. Residue D143 is part of the active site.

Belongs to the GHMP kinase family. IspE subfamily.

The enzyme catalyses 4-CDP-2-C-methyl-D-erythritol + ATP = 4-CDP-2-C-methyl-D-erythritol 2-phosphate + ADP + H(+). It functions in the pathway isoprenoid biosynthesis; isopentenyl diphosphate biosynthesis via DXP pathway; isopentenyl diphosphate from 1-deoxy-D-xylulose 5-phosphate: step 3/6. Catalyzes the phosphorylation of the position 2 hydroxy group of 4-diphosphocytidyl-2C-methyl-D-erythritol. This Vibrio cholerae serotype O1 (strain ATCC 39315 / El Tor Inaba N16961) protein is 4-diphosphocytidyl-2-C-methyl-D-erythritol kinase.